The chain runs to 80 residues: MSETIPKKPLKKGSLVFVDKNIYDKSIEALASDSDLPAYIFEGPGEILGIKEEYAQVRWRRPVPDVWFKLDQLKEYLASE.

It belongs to the complex I NdhO subunit family. As to quaternary structure, NDH-1 can be composed of about 15 different subunits; different subcomplexes with different compositions have been identified which probably have different functions.

Its subcellular location is the cellular thylakoid membrane. It catalyses the reaction a plastoquinone + NADH + (n+1) H(+)(in) = a plastoquinol + NAD(+) + n H(+)(out). The enzyme catalyses a plastoquinone + NADPH + (n+1) H(+)(in) = a plastoquinol + NADP(+) + n H(+)(out). NDH-1 shuttles electrons from an unknown electron donor, via FMN and iron-sulfur (Fe-S) centers, to quinones in the respiratory and/or the photosynthetic chain. The immediate electron acceptor for the enzyme in this species is believed to be plastoquinone. Couples the redox reaction to proton translocation, and thus conserves the redox energy in a proton gradient. Cyanobacterial NDH-1 also plays a role in inorganic carbon-concentration. This chain is NAD(P)H-quinone oxidoreductase subunit O, found in Prochlorococcus marinus (strain MIT 9515).